Consider the following 136-residue polypeptide: Putative pre-16S rRNA nuclease (136 aa).

Belongs to the YqgF nuclease family.

Its subcellular location is the cytoplasm. Its function is as follows. Could be a nuclease involved in processing of the 5'-end of pre-16S rRNA. The chain is Putative pre-16S rRNA nuclease from Francisella tularensis subsp. tularensis (strain WY96-3418).